The primary structure comprises 289 residues: dTDP-rhamnosyl transferase RfbG (289 aa).

This sequence belongs to the glycosyltransferase 2 family.

It participates in bacterial outer membrane biogenesis; lipopolysaccharide biosynthesis. The sequence is that of dTDP-rhamnosyl transferase RfbG (rfbG) from Shigella flexneri.